A 527-amino-acid chain; its full sequence is F-box protein SKIP2 (527 aa).

In terms of domain architecture, F-box spans 39–85 (DRDFTGDLPDECLAHVFQFLGAGDRKRCSLVCKRWLLVDGQSRHRLS).

Part of a SCF (ASK-cullin-F-box) protein ligase complex. Interacts with SKP1A/ASK1, SKP1B/ASK2 and ASK11.

Its subcellular location is the nucleus. It participates in protein modification; protein ubiquitination. In terms of biological role, component of SCF(ASK-cullin-F-box) E3 ubiquitin ligase complexes, which may mediate the ubiquitination and subsequent proteasomal degradation of target proteins. This is F-box protein SKIP2 (SKIP2) from Arabidopsis thaliana (Mouse-ear cress).